The primary structure comprises 149 residues: uncharacterized protein (149 aa).

This is an uncharacterized protein from Saccharomyces cerevisiae (strain ATCC 204508 / S288c) (Baker's yeast).